The chain runs to 64 residues: Large ribosomal subunit protein bL35 (64 aa).

The span at 1–15 (MPKNKTHSGTAKRFR) shows a compositional bias: basic residues. The disordered stretch occupies residues 1–27 (MPKNKTHSGTAKRFRVTGSGKLRREQA).

Belongs to the bacterial ribosomal protein bL35 family.

The polypeptide is Large ribosomal subunit protein bL35 (Saccharopolyspora erythraea (strain ATCC 11635 / DSM 40517 / JCM 4748 / NBRC 13426 / NCIMB 8594 / NRRL 2338)).